The sequence spans 241 residues: Fatty acid metabolism regulator protein (241 aa).

Positions 6–74 constitute an HTH gntR-type domain; the sequence is KGPASFAEKY…HGKPTRVNNF (69 aa). A DNA-binding region (H-T-H motif) is located at residues 34-53; that stretch reads ERELSELIGVTRTTLREVLQ.

In terms of assembly, homodimer.

The protein localises to the cytoplasm. Its function is as follows. Multifunctional regulator of fatty acid metabolism. The sequence is that of Fatty acid metabolism regulator protein from Shewanella sp. (strain ANA-3).